The sequence spans 510 residues: 2,3-bisphosphoglycerate-independent phosphoglycerate mutase (510 aa).

Mn(2+) is bound by residues D13 and S63. Catalysis depends on S63, which acts as the Phosphoserine intermediate. Residues H124, 154-155 (RD), R186, R192, 262-265 (RADR), and K334 each bind substrate. D401, H405, D442, H443, and H461 together coordinate Mn(2+).

It belongs to the BPG-independent phosphoglycerate mutase family. Monomer. Requires Mn(2+) as cofactor.

The catalysed reaction is (2R)-2-phosphoglycerate = (2R)-3-phosphoglycerate. It functions in the pathway carbohydrate degradation; glycolysis; pyruvate from D-glyceraldehyde 3-phosphate: step 3/5. Functionally, catalyzes the interconversion of 2-phosphoglycerate and 3-phosphoglycerate. This is 2,3-bisphosphoglycerate-independent phosphoglycerate mutase from Vibrio atlanticus (strain LGP32) (Vibrio splendidus (strain Mel32)).